The following is a 1196-amino-acid chain: Cingulin (1196 aa).

The segment at 7 to 354 (MAEPRGPVDH…LVMTSGSAKG (348 aa)) is head. The ZIM signature appears at 48 to 62 (ANTYGVAVRVQGIAG). Positions 54–67 (AVRVQGIAGQPFVV) are interaction with TJP1/ZO1. The tract at residues 82 to 105 (IKGTNNRGPPGALSSDSELPESTY) is disordered. S95, S96, S98, S135, S137, S140, S155, S165, and S214 each carry phosphoserine. A compositionally biased stretch (polar residues) spans 95-105 (SSDSELPESTY). Residues 183–263 (NKFDSRQGGQ…NQGPLGGFSC (81 aa)) are disordered. Basic and acidic residues predominate over residues 218–231 (RLPRDTLDEREHQF). Residues 245–256 (MGNSKQSSQNQG) show a composition bias toward polar residues. S274 carries the phosphoserine modification. Residues 355-1150 (LTGQSELSQK…ARIKTLEKDS (796 aa)) are a coiled coil. An N6-acetyllysine modification is found at K576. Residues 884–897 (AQRQAKEWATEAEK) show a composition bias toward basic and acidic residues. 3 disordered regions span residues 884–906 (AQRQ…SRLQ), 1023–1061 (DLKS…EERE), and 1149–1174 (DSWR…EEFD). Low complexity predominate over residues 1038-1050 (SASLSQLESQNQE). Residues 1051–1061 (LQERLQAEERE) show a composition bias toward basic and acidic residues. Positions 1155–1196 (SRSAAESAQREGLSSDEEFDSVYDPSSIASLLTESNLQTSSC) are tail. S1168, S1169, and S1175 each carry phosphoserine.

It belongs to the cingulin family. In terms of assembly, homodimer. Interacts with TJP1/ZO1 and SPEF1.

The protein resides in the cell junction. The protein localises to the tight junction. In terms of biological role, probably plays a role in the formation and regulation of the tight junction (TJ) paracellular permeability barrier. The polypeptide is Cingulin (Canis lupus familiaris (Dog)).